The chain runs to 72 residues: U1-sicaritoxin-Sdo1a (72 aa).

Residues 1-24 (MMKKFTCFLLCATILCAIFCVSVA) form the signal peptide. Positions 25–41 (EKFHKMKSDIERDETPM) are excised as a propeptide. 3 disulfide bridges follow: C43–C61, C50–C64, and C60–C69.

In terms of tissue distribution, expressed by the venom gland.

It is found in the secreted. This is U1-sicaritoxin-Sdo1a from Hexophthalma dolichocephala (Afrotropical spider).